The sequence spans 331 residues: Gem-associated protein 2 (331 aa).

Disordered stretches follow at residues 1–23, 101–130, and 151–222; these read MDEF…NEPL, SNRP…LIPQ, and NNNN…TKKP. Acidic residues predominate over residues 11–21; that stretch reads VGEEIEPDDNE. Over residues 106–126 the composition is skewed to low complexity; it reads NNNNNNNNNNNNNNNNNNNNN. Acidic residues predominate over residues 165–215; it reads DNQEDDDDDENNEDYEYNENKEEEEEEEEEEEEEEEVEEEEEEEEEEEEVV. Residues 173–224 are a coiled coil; it reads DENNEDYEYNENKEEEEEEEEEEEEEEEVEEEEEEEEEEEEVVDYSTKKPTL.

Belongs to the gemin-2 family.

It localises to the nucleus. The protein resides in the gem. Its subcellular location is the cytoplasm. Functionally, the SMN complex catalyzes the assembly of small nuclear ribonucleoproteins (snRNPs), the building blocks of the spliceosome, and thereby plays an important role in the splicing of cellular pre-mRNAs. Most spliceosomal snRNPs contain a common set of Sm proteins SNRPB, SNRPD1, SNRPD2, SNRPD3, SNRPE, SNRPF and SNRPG that assemble in a heptameric protein ring on the Sm site of the small nuclear RNA to form the core snRNP (Sm core). In the cytosol, the Sm proteins SNRPD1, SNRPD2, SNRPE, SNRPF and SNRPG (5Sm) are trapped in an inactive 6S pICln-Sm complex by the chaperone CLNS1A that controls the assembly of the core snRNP. To assemble core snRNPs, the SMN complex accepts the trapped 5Sm proteins from CLNS1A. Binding of snRNA inside 5Sm ultimately triggers eviction of the SMN complex, thereby allowing binding of SNRPD3 and SNRPB to complete assembly of the core snRNP. Within the SMN complex, GEMIN2 constrains the conformation of 5Sm, thereby promoting 5Sm binding to snRNA containing the snRNP code (a nonameric Sm site and a 3'-adjacent stem-loop), thus preventing progression of assembly until a cognate substrate is bound. Its function is as follows. May play an essential role in spliceosomal snRNP assembly in the cytoplasm and may be required for pre-mRNA splicing in the nucleus. In Dictyostelium discoideum (Social amoeba), this protein is Gem-associated protein 2 (gemin2).